We begin with the raw amino-acid sequence, 371 residues long: Cytochrome b (371 aa).

4 helical membrane passes run 25-45 (FGSM…FLAV), 69-90 (WLMQ…YIHI), 105-125 (WMSG…GYVL), and 170-190 (FFAL…LHII). His75 and His89 together coordinate heme b. His174 and His188 together coordinate heme b. His193 provides a ligand contact to a ubiquinone. The next 4 membrane-spanning stretches (helical) occupy residues 218-238 (YKDL…VSFF), 280-300 (LGGA…PLTH), 312-332 (LSQL…WAAT), and 339-358 (YIII…ISTP).

It belongs to the cytochrome b family. The cytochrome bc1 complex contains 3 respiratory subunits (MT-CYB, CYC1 and UQCRFS1), 2 core proteins (UQCRC1 and UQCRC2) and probably 6 low-molecular weight proteins. Heme b is required as a cofactor.

The protein resides in the mitochondrion inner membrane. Its function is as follows. Component of the ubiquinol-cytochrome c reductase complex (complex III or cytochrome b-c1 complex) that is part of the mitochondrial respiratory chain. The b-c1 complex mediates electron transfer from ubiquinol to cytochrome c. Contributes to the generation of a proton gradient across the mitochondrial membrane that is then used for ATP synthesis. The protein is Cytochrome b (MT-CYB) of Python regius (Ball python).